A 476-amino-acid polypeptide reads, in one-letter code: Probable secreted beta-glucosidase SIM1 (476 aa).

The first 19 residues, 1-19, serve as a signal peptide directing secretion; that stretch reads MKFSTAVTTLISSGAIVSA. Residues 111-203 show a composition bias toward low complexity; that stretch reads ATASTSQGAS…SSSSSSSGSG (93 aa). Residues 111–214 form a disordered region; that stretch reads ATASTSQGAS…IYGDLADFSG (104 aa). N-linked (GlcNAc...) asparagine glycosylation occurs at Asn-423.

It belongs to the SUN family.

It localises to the secreted. Its subcellular location is the cell wall. Its function is as follows. Involved in the remodeling of the cell wall during the various phases of yeast culture development and under various environmental conditions. Required for the maintenance of the CLB5 kinase activity. In Saccharomyces cerevisiae (strain ATCC 204508 / S288c) (Baker's yeast), this protein is Probable secreted beta-glucosidase SIM1 (SIM1).